The chain runs to 618 residues: Mitochondrial Rho GTPase 2 (618 aa).

Topologically, residues 1–592 (MRRDVRILLL…ELHPSSFWLR (592 aa)) are cytoplasmic. The Miro 1 domain maps to 2-168 (RRDVRILLLG…FYYAQKAVLH (167 aa)). GTP contacts are provided by glycine 16, lysine 17, threonine 18, and serine 19. Threonine 18 contributes to the Mg(2+) binding site. 2 residues coordinate Mg(2+): proline 35 and aspartate 57. Serine 59 is a binding site for GTP. A Glycyl lysine isopeptide (Lys-Gly) (interchain with G-Cter in ubiquitin) cross-link involves residue lysine 96. Positions 118, 119, 121, 149, and 150 each coordinate GTP. Residue lysine 119 forms a Glycyl lysine isopeptide (Lys-Gly) (interchain with G-Cter in ubiquitin) linkage. Residue lysine 164 forms a Glycyl lysine isopeptide (Lys-Gly) (interchain with G-Cter in ubiquitin) linkage. EF-hand domains follow at residues 184–219 (ACAQALTRIFRLSDQDLDQALSDEELNAFQKSCFGH) and 304–339 (LGYQFVQRVFEKHDQDRDGALSPVELQSLFSVFPAA). 8 residues coordinate Ca(2+): aspartate 197, aspartate 199, aspartate 201, glutamate 208, aspartate 317, aspartate 319, aspartate 321, and glutamate 328. The Miro 2 domain maps to 414 to 576 (RSVLLCKVVG…FTQLATMAAF (163 aa)). GTP-binding residues include glycine 426, glycine 428, lysine 429, serine 430, and alanine 431. The GDP site is built by glycine 426, glycine 428, lysine 429, serine 430, and alanine 431. Serine 430 provides a ligand contact to Mg(2+). Glutamate 471 is a Mg(2+) binding site. Positions 525, 527, and 556 each coordinate GTP. Residues lysine 525, aspartate 527, and cysteine 556 each coordinate GDP. A helical; Anchor for type IV membrane protein transmembrane segment spans residues 593-615 (GLLGVVGAAVAAVLSFSLYRVLV). The Mitochondrial intermembrane segment spans residues 616-618 (KSQ).

This sequence belongs to the mitochondrial Rho GTPase family. As to quaternary structure, homodimer. Interacts with the kinesin-binding proteins TRAK1/OIP106 and TRAK2/GRIF1, forming a link between mitochondria and the trafficking apparatus of the microtubules. Interacts with ARMCX3. Found in a complex with KIF5B, OGT, RHOT1 and TRAK1. In terms of processing, ubiquitinated by PRKN in a PINK1-dependent manner, leading to its degradation. As to expression, ubiquitously expressed. Highly expressed in heart, liver, skeletal muscle, kidney and pancreas.

It is found in the mitochondrion outer membrane. The enzyme catalyses GTP + H2O = GDP + phosphate + H(+). The catalysed reaction is ATP + H2O = ADP + phosphate + H(+). It catalyses the reaction UTP + H2O = UDP + phosphate + H(+). Its function is as follows. Atypical mitochondrial nucleoside-triphosphatase (NTPase) involved in mitochondrial trafficking. Probably involved in control of anterograde transport of mitochondria and their subcellular distribution. Can hydrolyze GTP. Can hydrolyze ATP and UTP. This is Mitochondrial Rho GTPase 2 (RHOT2) from Homo sapiens (Human).